The following is a 645-amino-acid chain: DNA mismatch repair protein MutL (645 aa).

Belongs to the DNA mismatch repair MutL/HexB family.

Functionally, this protein is involved in the repair of mismatches in DNA. It is required for dam-dependent methyl-directed DNA mismatch repair. May act as a 'molecular matchmaker', a protein that promotes the formation of a stable complex between two or more DNA-binding proteins in an ATP-dependent manner without itself being part of a final effector complex. The sequence is that of DNA mismatch repair protein MutL from Pediococcus pentosaceus (strain ATCC 25745 / CCUG 21536 / LMG 10740 / 183-1w).